We begin with the raw amino-acid sequence, 444 residues long: EMI domain-containing protein 1 (444 aa).

Positions 1–22 are cleaved as a signal peptide; the sequence is MGGPRAWTLLCLGLLLPGGGAA. Positions 33–106 constitute an EMI domain; that stretch reads RRNWCSYVVT…PGHSGVTCEE (74 aa). Disulfide bonds link C37–C96, C62–C68, and C95–C104. O-linked (Fuc) threonine glycosylation occurs at T42. A glycan (N-linked (GlcNAc...) asparagine) is linked at N51. Residue N136 is glycosylated (N-linked (GlcNAc...) asparagine). Disordered regions lie at residues 161 to 374 and 404 to 444; these read EQTV…KSHW and PDLG…SERS. The region spanning 221–371 is the Collagen-like domain; sequence GPPGPQGPPG…PGPKGDPGEK (151 aa). The segment covering 222–231 has biased composition (pro residues); that stretch reads PPGPQGPPGR. Residues 232–243 are compositionally biased toward low complexity; it reads PGQTGAAGTPGK. Pro residues-rich tracts occupy residues 244–264 and 292–311; these read MGPPGPPGPPGPPGPPAPVGP and PTGPPGPPGPPGPMGPPGLP.

As to quaternary structure, homo- or heteromers. In terms of processing, O-fucosylated at Thr-42 within the EMI domain by FUT10/POFUT3 and FUT11/POFUT4.

The protein resides in the secreted. It localises to the extracellular space. It is found in the extracellular matrix. This chain is EMI domain-containing protein 1 (Emid1), found in Mus musculus (Mouse).